A 275-amino-acid polypeptide reads, in one-letter code: Large ribosomal subunit protein uL2 (275 aa).

Residues 225–275 (MNPVDHPHGGGEGRSPIGRPPVTPWGKPALGTRTRNKKKASSKLIVKRRTK) are disordered. Over residues 258-275 (TRNKKKASSKLIVKRRTK) the composition is skewed to basic residues.

This sequence belongs to the universal ribosomal protein uL2 family. As to quaternary structure, part of the 50S ribosomal subunit. Forms a bridge to the 30S subunit in the 70S ribosome.

In terms of biological role, one of the primary rRNA binding proteins. Required for association of the 30S and 50S subunits to form the 70S ribosome, for tRNA binding and peptide bond formation. It has been suggested to have peptidyltransferase activity; this is somewhat controversial. Makes several contacts with the 16S rRNA in the 70S ribosome. This Desulforudis audaxviator (strain MP104C) protein is Large ribosomal subunit protein uL2.